A 263-amino-acid polypeptide reads, in one-letter code: Renal glandular kallikrein (263 aa).

Residues 1–18 form the signal peptide; the sequence is MWFLILFLALFLGGIDAA. A propeptide spans 19 to 24 (activation peptide); it reads PPVQSR. One can recognise a Peptidase S1 domain in the interval 25-260; sequence IIGGFNCEKN…YRSWIKDVMA (236 aa). Intrachain disulfides connect C31-C175, C50-C66, C153-C221, C186-C200, and C211-C236. H65 functions as the Charge relay system in the catalytic mechanism. N102 is a glycosylation site (N-linked (GlcNAc...) asparagine). The active-site Charge relay system is the D121. Catalysis depends on S215, which acts as the Charge relay system.

The protein belongs to the peptidase S1 family. Kallikrein subfamily.

It catalyses the reaction Preferential cleavage of Arg-|-Xaa bonds in small molecule substrates. Highly selective action to release kallidin (lysyl-bradykinin) from kininogen involves hydrolysis of Met-|-Xaa or Leu-|-Xaa.. Glandular kallikreins cleave Met-Lys and Arg-Ser bonds in kininogen to release Lys-bradykinin. The sequence is that of Renal glandular kallikrein from Mastomys natalensis (African soft-furred rat).